A 220-amino-acid polypeptide reads, in one-letter code: 3-dehydroquinate dehydratase (220 aa).

Residues 29 to 31 (EFR) and arginine 56 contribute to the 3-dehydroquinate site. Histidine 116 (proton donor/acceptor) is an active-site residue. Residue lysine 142 is the Schiff-base intermediate with substrate of the active site. 3 residues coordinate 3-dehydroquinate: arginine 180, serine 200, and glutamine 204.

It belongs to the type-I 3-dehydroquinase family. As to quaternary structure, homodimer.

It carries out the reaction 3-dehydroquinate = 3-dehydroshikimate + H2O. The protein operates within metabolic intermediate biosynthesis; chorismate biosynthesis; chorismate from D-erythrose 4-phosphate and phosphoenolpyruvate: step 3/7. Involved in the third step of the chorismate pathway, which leads to the biosynthesis of aromatic amino acids. Catalyzes the cis-dehydration of 3-dehydroquinate (DHQ) and introduces the first double bond of the aromatic ring to yield 3-dehydroshikimate. This is 3-dehydroquinate dehydratase from Methanocaldococcus jannaschii (strain ATCC 43067 / DSM 2661 / JAL-1 / JCM 10045 / NBRC 100440) (Methanococcus jannaschii).